The sequence spans 328 residues: RING finger protein 175 (328 aa).

5 consecutive transmembrane segments (helical) span residues 51–71 (MHVE…IVLV), 83–103 (LVTL…LYWW), 104–121 (RFLS…YILF), 149–169 (AFGV…NLFF), and 180–200 (GIVS…FAEI). The RING-type; atypical zinc finger occupies 227–277 (CAVCGQKIIVELDEEGLIENTYQLSCNHVFHEFCIRGWCIVGKKQTCPYCK).

Its subcellular location is the membrane. This Homo sapiens (Human) protein is RING finger protein 175 (RNF175).